A 308-amino-acid chain; its full sequence is Ornithine carbamoyltransferase (308 aa).

Carbamoyl phosphate-binding positions include 51–54 (STRT), Gln-78, Arg-102, and 129–132 (HPTQ). Residues Asn-160, Asp-224, and 228–229 (SM) contribute to the L-ornithine site. Residues 264-265 (CL) and Arg-292 each bind carbamoyl phosphate.

It belongs to the aspartate/ornithine carbamoyltransferase superfamily. OTCase family.

It is found in the cytoplasm. The catalysed reaction is carbamoyl phosphate + L-ornithine = L-citrulline + phosphate + H(+). The protein operates within amino-acid biosynthesis; L-arginine biosynthesis; L-arginine from L-ornithine and carbamoyl phosphate: step 1/3. In terms of biological role, reversibly catalyzes the transfer of the carbamoyl group from carbamoyl phosphate (CP) to the N(epsilon) atom of ornithine (ORN) to produce L-citrulline. The protein is Ornithine carbamoyltransferase of Caldicellulosiruptor saccharolyticus (strain ATCC 43494 / DSM 8903 / Tp8T 6331).